A 307-amino-acid polypeptide reads, in one-letter code: Ribosomal RNA small subunit methyltransferase H (307 aa).

Residues 32–34 (GGH), D52, F78, D99, and Q106 contribute to the S-adenosyl-L-methionine site. The segment at 287 to 307 (KEEIESNKRSHSAKLRVAEKV) is disordered.

Belongs to the methyltransferase superfamily. RsmH family.

It localises to the cytoplasm. The catalysed reaction is cytidine(1402) in 16S rRNA + S-adenosyl-L-methionine = N(4)-methylcytidine(1402) in 16S rRNA + S-adenosyl-L-homocysteine + H(+). Functionally, specifically methylates the N4 position of cytidine in position 1402 (C1402) of 16S rRNA. This is Ribosomal RNA small subunit methyltransferase H from Caldicellulosiruptor bescii (strain ATCC BAA-1888 / DSM 6725 / KCTC 15123 / Z-1320) (Anaerocellum thermophilum).